The sequence spans 188 residues: PRA1 family protein 3 (188 aa).

Position 1 is an N-acetylmethionine (Met-1). Topologically, residues 1–35 (MDVNIAPLRAWDDFFPGSDRFAQPDFRDISKWNNR) are cytoplasmic. 2 consecutive transmembrane segments (helical) span residues 36–56 (VVSN…MMIS) and 57–77 (VVGF…VLVF). The Cytoplasmic portion of the chain corresponds to 78 to 93 (TGFVWAAHNKDALRRL). 2 helical membrane passes run 94–114 (KKRY…FLIS) and 115–135 (MFGG…LMFI). Residues 103 to 117 (MVVMLASYFLISMFG) are required for homodimer formation and heterodimer formation with ARL6IP1. At 136-188 (HASLRLRNLKNKLENKMEGIGLKRTPMGIVLDALEQQEEGINRLTDYISKVKE) the chain is on the cytoplasmic side. Positions 136–188 (HASLRLRNLKNKLENKMEGIGLKRTPMGIVLDALEQQEEGINRLTDYISKVKE) are targeting to endoplasmic reticulum membrane.

Belongs to the PRA1 family. Homodimer. Heterodimer with ARL6IP1. Forms multimers. Interacts with ARL6. Interacts with prenylated RAB1A and RAB3A. Interacts with SLC1A1/EAAC1. Interacts with RTN2 (via first transmembrane domain). Does not interact with VAMP1, VAMP2 or VAMP3.

The protein localises to the endoplasmic reticulum membrane. It localises to the cell membrane. It is found in the cytoplasm. Its subcellular location is the cytoskeleton. Regulates intracellular concentrations of taurine and glutamate. Negatively modulates SLC1A1/EAAC1 glutamate transport activity by decreasing its affinity for glutamate in a PKC activity-dependent manner. Plays a role in the retention of SLC1A1/EAAC1 in the endoplasmic reticulum. This Macaca fascicularis (Crab-eating macaque) protein is PRA1 family protein 3 (ARL6IP5).